Reading from the N-terminus, the 131-residue chain is MSWQAYVDEHLMCEIEGHHLASAAILGHDGTVWAQSADFPQFKPEEITGIMKDFDEPGHLAPTGMFVAAAKYMVIQGEPGAVIRGKKGAGGITIKKTGQALVVGIYDEPMTPGQCNMVVERLGDYLVKQGL.

The cysteines at positions 13 and 115 are disulfide-linked. The short motif at 81-97 (AVIRGKKGAGGITIKKT) is the Involved in PIP2 interaction element. At T111 the chain carries Phosphothreonine.

It belongs to the profilin family. As to quaternary structure, occurs in many kinds of cells as a complex with monomeric actin in a 1:1 ratio. In terms of processing, phosphorylated by MAP kinases.

It localises to the cytoplasm. It is found in the cytoskeleton. Binds to actin and affects the structure of the cytoskeleton. At high concentrations, profilin prevents the polymerization of actin, whereas it enhances it at low concentrations. This Phleum pratense (Common timothy) protein is Profilin-5.